Consider the following 375-residue polypeptide: Elongation factor Tu (375 aa).

Positions 10 to 205 constitute a tr-type G domain; the sequence is KPHINVGAIG…TMDKYFVIPE (196 aa). The interval 19 to 26 is G1; it reads GHVDHGKT. 19–26 serves as a coordination point for GTP; that stretch reads GHVDHGKT. Mg(2+) is bound at residue Thr26. The G2 stretch occupies residues 60-64; it reads GITIN. The G3 stretch occupies residues 81–84; it reads DCPG. GTP-binding positions include 81–85 and 136–139; these read DCPGH and NKMD. The segment at 136 to 139 is G4; that stretch reads NKMD. Residues 173–175 form a G5 region; sequence SAF.

This sequence belongs to the TRAFAC class translation factor GTPase superfamily. Classic translation factor GTPase family. EF-Tu/EF-1A subfamily. Monomer.

It localises to the cytoplasm. It carries out the reaction GTP + H2O = GDP + phosphate + H(+). In terms of biological role, GTP hydrolase that promotes the GTP-dependent binding of aminoacyl-tRNA to the A-site of ribosomes during protein biosynthesis. The polypeptide is Elongation factor Tu (tuf) (Spirochaeta aurantia).